Here is a 48-residue protein sequence, read N- to C-terminus: Protein TUNAR (48 aa).

Residues 1-20 (MVITSGNDEDRGGQEKESKE) are disordered. The segment covering 8-20 (DEDRGGQEKESKE) has biased composition (basic and acidic residues). Residues 24–44 (LAMLGIIGTILNLIVIIFVYI) traverse the membrane as a helical segment.

In terms of assembly, interacts with ATPase ATP2A2/SERCA2. Interacts with ATPase ATP2A3/SERCA3; the interaction occurs at low levels in low glucose conditions and is increased by high glucose levels. In the adult, expressed in Purkinje cells in the cerebellum, in motor neurons and interneurons in the spinal cord and in neurons of the cortex, hippocampus and thalamus (at protein level). Also detected in the developing cortex, hippocampus and thalamus at embryonic day E15.5 (at protein level).

It localises to the endoplasmic reticulum membrane. The protein resides in the extracellular vesicle membrane. Functionally, in neurons, plays a role in the regulation of intracellular Ca(2+), possibly by acting as an activator of ATP2A2/SERCA2, thus increasing the efficiency with which Ca(2+) is removed from the cytoplasm. Inhibits differentiation of embryonic stem cells into neurons and inhibits neurite outgrowth, likely as a result of its role in intracellular Ca(2+) regulation. In pancreatic beta cells, lowers Ca(2+) levels in the endoplasmic reticulum and enhances glucose-stimulated insulin secretion. The polypeptide is Protein TUNAR (Mus musculus (Mouse)).